A 333-amino-acid polypeptide reads, in one-letter code: Adenosine deaminase (333 aa).

Zn(2+) is bound by residues His-12 and His-14. Positions 14, 16, and 170 each coordinate substrate. His-197 contacts Zn(2+). Catalysis depends on Glu-200, which acts as the Proton donor. Residue Asp-278 coordinates Zn(2+). Asp-279 provides a ligand contact to substrate.

Belongs to the metallo-dependent hydrolases superfamily. Adenosine and AMP deaminases family. Adenosine deaminase subfamily. The cofactor is Zn(2+).

The catalysed reaction is adenosine + H2O + H(+) = inosine + NH4(+). The enzyme catalyses 2'-deoxyadenosine + H2O + H(+) = 2'-deoxyinosine + NH4(+). Catalyzes the hydrolytic deamination of adenosine and 2-deoxyadenosine. The chain is Adenosine deaminase from Escherichia coli O81 (strain ED1a).